We begin with the raw amino-acid sequence, 463 residues long: Perilipin-5 (463 aa).

A disordered region spans residues 1-32 (MDQRGEDTTLAPHSRMSGDQTAQDPGSSLGEL). The interval 1–123 (MDQRGEDTTL…KLEEKLPFLQ (123 aa)) is interaction with LIPE. The interval 1 to 188 (MDQRGEDTTL…RFLPMTEAEL (188 aa)) is essential for lipid droplet targeting. Residues S17, S163, and S337 each carry the phosphoserine modification. A compositionally biased stretch (polar residues) spans 17–26 (SGDQTAQDPG). An interaction with PNPLA2 and ABHD5 region spans residues 200-463 (VGTVEEQRQQ…KHTMMPELDF (264 aa)). The tract at residues 433–463 (AWEAESADPGGQEAEPPRGQGKHTMMPELDF) is disordered. The interval 444–463 (QEAEPPRGQGKHTMMPELDF) is necessary for mitochondria recruitment at the lipid droplet surface.

It belongs to the perilipin family. Homooligomer. Interacts with PNPLA2; prevents interaction of PNPLA2 with ABHD5. Interacts with ABHD5; targets ABHD5 to lipid droplets and promotes interaction of ABHD5 with PNPLA2. Interacts with LIPE. Post-translationally, phosphorylated by PKA. Phosphorylated on serine in skeletal muscle at rest or with lipolytic stimulation. Highly expressed in oxidative tissues, including heart, liver, brown adipose tissue (BAT) and slow-twitch fibers of skeletal muscle. Lower expression in epididymal white adipose tissue and anterior tibialis and quadriceps. Expressed in adrenal glands. Isoform 2 has the highest expression in heart.

It is found in the lipid droplet. Its subcellular location is the cytoplasm. It localises to the mitochondrion. In terms of biological role, lipid droplet-associated protein that maintains the balance between lipogenesis and lipolysis and also regulates fatty acid oxidation in oxidative tissues. Recruits mitochondria to the surface of lipid droplets and is involved in lipid droplet homeostasis by regulating both the storage of fatty acids in the form of triglycerides and the release of fatty acids for mitochondrial fatty acid oxidation. In lipid droplet triacylglycerol hydrolysis, plays a role as a scaffolding protein for three major key lipolytic players: ABHD5, PNPLA2 and LIPE. Reduces the triacylglycerol hydrolase activity of PNPLA2 by recruiting and sequestering PNPLA2 to lipid droplets. Phosphorylation by PKA enables lipolysis probably by promoting release of ABHD5 from the perilipin scaffold and by facilitating interaction of ABHD5 with PNPLA2. Also increases lipolysis through interaction with LIPE and upon PKA-mediated phosphorylation of LIPE. The chain is Perilipin-5 (Plin5) from Mus musculus (Mouse).